Here is a 387-residue protein sequence, read N- to C-terminus: Acetylornithine deacetylase (387 aa).

Residue histidine 80 coordinates Zn(2+). Aspartate 82 is a catalytic residue. Aspartate 112 is a Zn(2+) binding site. Glutamate 144 is an active-site residue. Zn(2+) is bound by residues glutamate 145, glutamate 169, and histidine 355.

The protein belongs to the peptidase M20A family. ArgE subfamily. As to quaternary structure, homodimer. Zn(2+) is required as a cofactor. Co(2+) serves as cofactor. The cofactor is glutathione.

The protein resides in the cytoplasm. The catalysed reaction is N(2)-acetyl-L-ornithine + H2O = L-ornithine + acetate. Its pathway is amino-acid biosynthesis; L-arginine biosynthesis; L-ornithine from N(2)-acetyl-L-ornithine (linear): step 1/1. Functionally, catalyzes the hydrolysis of the amide bond of N(2)-acetylated L-amino acids. Cleaves the acetyl group from N-acetyl-L-ornithine to form L-ornithine, an intermediate in L-arginine biosynthesis pathway, and a branchpoint in the synthesis of polyamines. The polypeptide is Acetylornithine deacetylase (Proteus mirabilis (strain HI4320)).